The following is a 130-amino-acid chain: Mediator of RNA polymerase II transcription subunit 31 (130 aa).

It belongs to the Mediator complex subunit 31 family. As to quaternary structure, component of the Mediator complex.

The protein resides in the nucleus. In terms of biological role, component of the Mediator complex, a coactivator involved in the regulated transcription of nearly all RNA polymerase II-dependent genes. Mediator functions as a bridge to convey information from gene-specific regulatory proteins to the basal RNA polymerase II transcription machinery. Mediator is recruited to promoters by direct interactions with regulatory proteins and serves as a scaffold for the assembly of a functional preinitiation complex with RNA polymerase II and the general transcription factors. The sequence is that of Mediator of RNA polymerase II transcription subunit 31 (SOH1) from Candida glabrata (strain ATCC 2001 / BCRC 20586 / JCM 3761 / NBRC 0622 / NRRL Y-65 / CBS 138) (Yeast).